Consider the following 485-residue polypeptide: MALLVEKTTSGREYKVKDMSQADFGRLEIELAEVEMPGLMASRSEFGPSQPFKGAKITGSLHMTIQTAVLIETLTALGAEVRWCSCNIFSTQDHAAAAIARDSAAVFAWKGETLQEYWWCTERALDWGPGGGPDLIVDDGGDTTLLIHEGVKAEEIYEKSGQFPDPDSTDNAEFKIVLSIIKEGLKTDPKRYHKMKDRVVGVSEETTTGVKRLYQMQANGTLLFPAINVNDSVTKSKFDNLYGCRHSLPDGLMRATDVMIAGKVAVVAGYGDVGKGCAAALKQAGARVIVTEIDPICALQATMEGLQVLTLEDVVSEADIFVTTTGNKDIIMLDHMKKMKNNAIVCNIGHFDNEIDMLGLETHPGVKRITIKPQTDRWVFPETNTGIIILAEGRLMNLGCATGHPSFVMSCSFTNQVIAQLELWNEKSSGKYEKKVYVLPKHLDEKVAALHLEKLGAKLTKLSKDQADYISVPVEGPYKPFHYRY.

Residues Thr-64, Asp-139, and Glu-205 each coordinate substrate. Residue 206-208 (TTT) coordinates NAD(+). Lys-235 and Asp-239 together coordinate substrate. NAD(+) is bound by residues Asn-240, 269–274 (GYGDVG), Glu-292, Asn-327, 348–350 (IGH), and Asn-397.

It belongs to the adenosylhomocysteinase family. It depends on NAD(+) as a cofactor.

It catalyses the reaction S-adenosyl-L-homocysteine + H2O = L-homocysteine + adenosine. It functions in the pathway amino-acid biosynthesis; L-homocysteine biosynthesis; L-homocysteine from S-adenosyl-L-homocysteine: step 1/1. Functionally, adenosylhomocysteine is a competitive inhibitor of S-adenosyl-L-methionine-dependent methyl transferase reactions; therefore adenosylhomocysteinase may play a key role in the control of methylations via regulation of the intracellular concentration of adenosylhomocysteine. The polypeptide is Adenosylhomocysteinase (SAHH) (Lupinus luteus (European yellow lupine)).